Consider the following 117-residue polypeptide: PBP1-interacting protein XAC1 (117 aa).

The segment at 1–60 (MSKAPSQPAKKWMSARTLAKSEDATNRKSNTAAPASQPSQQPASVMHERPTPPPPAPVQL) is disordered. Residues 32–44 (AAPASQPSQQPAS) show a composition bias toward low complexity.

Forms a complex composed of at least MKT1, PBP1, XAC1 and LSM12. Forms a complex composed of at least MKT1L, PBP1, XAC1 and LSM12.

It localises to the cytoplasm. Involved in post-transcriptional regulation of gene expression. This chain is PBP1-interacting protein XAC1, found in Trypanosoma brucei brucei (strain 927/4 GUTat10.1).